A 197-amino-acid chain; its full sequence is Small ribosomal subunit protein uS4A (197 aa).

One can recognise an S4 RNA-binding domain in the interval 107–181 (RRLQTQVYKL…VARRNAARKA (75 aa)). A disordered region spans residues 160 to 197 (PTSPFGGARPGRVARRNAARKAEASGEAADEADEADEE). Lys180 is covalently cross-linked (Glycyl lysine isopeptide (Lys-Gly) (interchain with G-Cter in ubiquitin)). Phosphoserine is present on Ser184. Positions 187-197 (AADEADEADEE) are enriched in acidic residues.

This sequence belongs to the universal ribosomal protein uS4 family. Component of the small ribosomal subunit (SSU). Mature yeast ribosomes consist of a small (40S) and a large (60S) subunit. The 40S small subunit contains 1 molecule of ribosomal RNA (18S rRNA) and 33 different proteins (encoded by 57 genes). The large 60S subunit contains 3 rRNA molecules (25S, 5.8S and 5S rRNA) and 46 different proteins (encoded by 81 genes). Interacts with snoRNA U3. uS11 interacts with MPP10. Component of the ribosomal small subunit (SSU) processome composed of at least 40 protein subunits and snoRNA U3.

The protein resides in the cytoplasm. It is found in the nucleus. The protein localises to the nucleolus. Component of the ribosome, a large ribonucleoprotein complex responsible for the synthesis of proteins in the cell. The small ribosomal subunit (SSU) binds messenger RNAs (mRNAs) and translates the encoded message by selecting cognate aminoacyl-transfer RNA (tRNA) molecules. The large subunit (LSU) contains the ribosomal catalytic site termed the peptidyl transferase center (PTC), which catalyzes the formation of peptide bonds, thereby polymerizing the amino acids delivered by tRNAs into a polypeptide chain. The nascent polypeptides leave the ribosome through a tunnel in the LSU and interact with protein factors that function in enzymatic processing, targeting, and the membrane insertion of nascent chains at the exit of the ribosomal tunnel. uS4 is involved in nucleolar processing of pre-18S ribosomal RNA and ribosome assembly. In Saccharomyces cerevisiae (strain ATCC 204508 / S288c) (Baker's yeast), this protein is Small ribosomal subunit protein uS4A.